We begin with the raw amino-acid sequence, 329 residues long: Deoxyhypusine hydroxylase (329 aa).

HEAT-like PBS-type repeat units lie at residues 65-91 (LKHE…VLED), 99-124 (RHEA…MRDD), 232-258 (FRHE…ALSN), and 265-292 (VRHE…FLND). Fe cation is bound by residues His-67, Glu-68, His-100, Glu-101, His-234, Glu-235, His-267, and Glu-268.

This sequence belongs to the deoxyhypusine hydroxylase family. It depends on Fe(2+) as a cofactor.

Its subcellular location is the cytoplasm. The protein localises to the nucleus. It carries out the reaction [eIF5A protein]-deoxyhypusine + AH2 + O2 = [eIF5A protein]-hypusine + A + H2O. It participates in protein modification; eIF5A hypusination. Functionally, catalyzes the hydroxylation of the N(6)-(4-aminobutyl)-L-lysine intermediate to form hypusine, an essential post-translational modification only found in mature eIF-5A factor. The chain is Deoxyhypusine hydroxylase from Phaeosphaeria nodorum (strain SN15 / ATCC MYA-4574 / FGSC 10173) (Glume blotch fungus).